A 76-amino-acid polypeptide reads, in one-letter code: Conotoxin Ca11b (76 aa).

The N-terminal stretch at 1–19 (MKLVLAIVVILMLLSLSTG) is a signal peptide. The propeptide occupies 20–42 (AEMSDNHASMSANALRDRLLGPK). 4 cysteine pairs are disulfide-bonded: cysteine 46–cysteine 60, cysteine 53–cysteine 65, cysteine 59–cysteine 69, and cysteine 64–cysteine 76.

In terms of tissue distribution, expressed by the venom duct.

It localises to the secreted. This Conus caracteristicus (Characteristic cone) protein is Conotoxin Ca11b.